The sequence spans 320 residues: GDSL esterase/lipase At3g43570 (320 aa).

The N-terminal stretch at 1–19 is a signal peptide; that stretch reads MKIQIIWLTLVLIVVEANA. A glycan (N-linked (GlcNAc...) asparagine) is linked at asparagine 25. The active-site Nucleophile is the serine 37. N-linked (GlcNAc...) asparagine glycosylation is present at asparagine 287. Residues aspartate 295 and histidine 298 contribute to the active site.

Belongs to the 'GDSL' lipolytic enzyme family.

The protein localises to the secreted. The chain is GDSL esterase/lipase At3g43570 from Arabidopsis thaliana (Mouse-ear cress).